The following is a 90-amino-acid chain: MKNIKPLADRVLIKIKEAESKTISGLYIPENAKEKTNIGTVIAVGSNKEEITVKVGDTVLYEKYAGAAVKIENKEHLILKAKEIVAIIEE.

It belongs to the GroES chaperonin family. Heptamer of 7 subunits arranged in a ring. Interacts with the chaperonin GroEL.

Its subcellular location is the cytoplasm. Its function is as follows. Together with the chaperonin GroEL, plays an essential role in assisting protein folding. The GroEL-GroES system forms a nano-cage that allows encapsulation of the non-native substrate proteins and provides a physical environment optimized to promote and accelerate protein folding. GroES binds to the apical surface of the GroEL ring, thereby capping the opening of the GroEL channel. This is Co-chaperonin GroES from Borreliella burgdorferi (strain ATCC 35210 / DSM 4680 / CIP 102532 / B31) (Borrelia burgdorferi).